The chain runs to 701 residues: Centrosomal protein of 83 kDa (701 aa).

Residues 1–14 (MVVSTFTDMDTFPN) show a composition bias toward polar residues. The disordered stretch occupies residues 1–23 (MVVSTFTDMDTFPNNFPPGGDSG). 2 coiled-coil regions span residues 40–634 (LRCE…SLIL) and 665–698 (HMQEEQHQRELSLLRKRLEELETTQRKQLEELGS). The residue at position 698 (S698) is a Phosphoserine.

This sequence belongs to the CEP83 family. As to quaternary structure, interacts with CEP164 and IFT20.

Its subcellular location is the cytoplasm. It is found in the cytoskeleton. It localises to the microtubule organizing center. The protein localises to the centrosome. The protein resides in the centriole. Component of the distal appendage region of the centriole involved in the initiation of primary cilium assembly. May collaborate with IFT20 in the trafficking of ciliary membrane proteins from the Golgi complex to the cilium during the initiation of primary cilium assembly. This Homo sapiens (Human) protein is Centrosomal protein of 83 kDa (CEP83).